A 564-amino-acid chain; its full sequence is Proline--tRNA ligase (564 aa).

Belongs to the class-II aminoacyl-tRNA synthetase family. ProS type 1 subfamily. As to quaternary structure, homodimer.

Its subcellular location is the cytoplasm. It catalyses the reaction tRNA(Pro) + L-proline + ATP = L-prolyl-tRNA(Pro) + AMP + diphosphate. Its function is as follows. Catalyzes the attachment of proline to tRNA(Pro) in a two-step reaction: proline is first activated by ATP to form Pro-AMP and then transferred to the acceptor end of tRNA(Pro). As ProRS can inadvertently accommodate and process non-cognate amino acids such as alanine and cysteine, to avoid such errors it has two additional distinct editing activities against alanine. One activity is designated as 'pretransfer' editing and involves the tRNA(Pro)-independent hydrolysis of activated Ala-AMP. The other activity is designated 'posttransfer' editing and involves deacylation of mischarged Ala-tRNA(Pro). The misacylated Cys-tRNA(Pro) is not edited by ProRS. The protein is Proline--tRNA ligase of Xylella fastidiosa (strain 9a5c).